The sequence spans 190 residues: Female-specific histamine-binding protein 2 (190 aa).

The signal sequence occupies residues 1-19 (MKLLILSLALVLALSQVKG). 12 residues coordinate histamine: S39, D43, Y55, D58, W61, E101, F117, Y119, F127, D139, E154, and W156. Disulfide bonds link C67/C188 and C138/C167.

It belongs to the calycin superfamily. Histamine-binding salivary protein family. As to quaternary structure, monomer. In terms of tissue distribution, expressed in salivary glands.

It is found in the secreted. In terms of biological role, salivary tick protein that acts by scavenging histamine at the wound site, outcompeting histamine receptors for histamine, thereby overcoming host inflammatory responses. Binds histamine with a high-affinity (Kd=1.7 nM). Contains two binding histamine sites (H and L), that appear to bind histamine with differing affinities (high and low). The polypeptide is Female-specific histamine-binding protein 2 (Rhipicephalus appendiculatus (Brown ear tick)).